A 981-amino-acid chain; its full sequence is Translation initiation factor IF-2 (981 aa).

The tract at residues 31–370 is disordered; that stretch reads FVKSASSTVE…SKRAKRAEYE (340 aa). Low complexity predominate over residues 64 to 87; that stretch reads GAAAPAARPAAKPGAPSPSAAKPG. Residues 88 to 111 are compositionally biased toward pro residues; sequence GPRPGPKPAAPAPAAPAAPAPAAP. The span at 112-121 shows a compositional bias: low complexity; that stretch reads AAPAAAAPAA. Pro residues predominate over residues 136–145; it reads PAQPARPAPA. Residues 146–165 show a composition bias toward low complexity; the sequence is APAASAPAAPAAPAAPSTGA. Over residues 256–269 the composition is skewed to pro residues; the sequence is RPSPGSMPPRPNPG. Residues 270-279 are compositionally biased toward low complexity; sequence AMPARSARPA. The segment covering 280–339 has biased composition (gly residues); sequence PGGGGRPGRPGGAPGGRPGGGGGGYRGGGAPGAGAGAGAPGGAAPAGGFRGRPGGGGRPG. Positions 356-365 are enriched in basic residues; it reads RRGRKSKRAK. Residues 477-649 enclose the tr-type G domain; it reads SRPPVVTVMG…VLLTADASLD (173 aa). The interval 486 to 493 is G1; it reads GHVDHGKT. A GTP-binding site is contributed by 486–493; that stretch reads GHVDHGKT. A G2 region spans residues 511 to 515; that stretch reads GITQH. The tract at residues 536-539 is G3; sequence DTPG. GTP-binding positions include 536–540 and 590–593; these read DTPGH and NKID. Residues 590-593 form a G4 region; the sequence is NKID. Residues 626–628 form a G5 region; sequence SAK.

It belongs to the TRAFAC class translation factor GTPase superfamily. Classic translation factor GTPase family. IF-2 subfamily.

It is found in the cytoplasm. One of the essential components for the initiation of protein synthesis. Protects formylmethionyl-tRNA from spontaneous hydrolysis and promotes its binding to the 30S ribosomal subunits. Also involved in the hydrolysis of GTP during the formation of the 70S ribosomal complex. This chain is Translation initiation factor IF-2, found in Rhodococcus erythropolis (strain PR4 / NBRC 100887).